The primary structure comprises 693 residues: Zinc finger protein 441 (693 aa).

The 76-residue stretch at 4-79 (VAFEDVAINF…ERACEIKDNS (76 aa)) folds into the KRAB domain. The C2H2-type 1 zinc finger occupies 169–190 (YDCKECASFSSLENLQRHMAAH). The C2H2-type 2; degenerate zinc finger occupies 196-218 (RICKLCGNAFIWPSLFHMLRRTH). The C2H2-type 3; degenerate zinc-finger motif lies at 224–246 (YEYEQCSTAFPAYSSTLRHERTH). A C2H2-type 4; degenerate zinc finger spans residues 252–274 (YQCKQCGKAFSCSCYTQLYERTH). 15 consecutive C2H2-type zinc fingers follow at residues 280–302 (YECK…MIVH), 308–330 (HKCK…KRTH), 336–358 (YECK…MITH), 364–386 (HKCK…ETTH), 392–413 (YKCE…ETTH), 419–441 (YKCK…ERIH), 447–469 (YKCK…EKTH), 475–497 (YECK…MIMH), 503–525 (HKCK…ERIH), 531–553 (YKCK…ERTH), 559–581 (YGCQ…MITH), 587–609 (HKCK…ERTH), 615–637 (YECK…ERVH), 643–665 (YKCK…ERTH), and 671–693 (YKCK…EMTH).

The protein belongs to the krueppel C2H2-type zinc-finger protein family.

The protein resides in the nucleus. In terms of biological role, may be involved in transcriptional regulation. The sequence is that of Zinc finger protein 441 (ZNF441) from Homo sapiens (Human).